A 197-amino-acid chain; its full sequence is uncharacterized protein (197 aa).

This sequence belongs to the methyltransferase superfamily.

This is an uncharacterized protein from Mycobacterium bovis (strain ATCC BAA-935 / AF2122/97).